The chain runs to 128 residues: uncharacterized protein (128 aa).

Positions 95–123 (IIDFATAKRELDRLTEEIATLKGELAQDK) form a coiled coil.

The protein localises to the cellular thylakoid membrane. This is an uncharacterized protein from Synechocystis sp. (strain ATCC 27184 / PCC 6803 / Kazusa).